A 313-amino-acid polypeptide reads, in one-letter code: Ribosomal RNA small subunit methyltransferase H (313 aa).

Residues 35 to 37 (GGH), D55, F79, D101, and Q108 contribute to the S-adenosyl-L-methionine site.

It belongs to the methyltransferase superfamily. RsmH family.

Its subcellular location is the cytoplasm. The catalysed reaction is cytidine(1402) in 16S rRNA + S-adenosyl-L-methionine = N(4)-methylcytidine(1402) in 16S rRNA + S-adenosyl-L-homocysteine + H(+). In terms of biological role, specifically methylates the N4 position of cytidine in position 1402 (C1402) of 16S rRNA. The chain is Ribosomal RNA small subunit methyltransferase H from Salmonella agona (strain SL483).